Consider the following 353-residue polypeptide: Basic membrane protein C (353 aa).

An N-terminal signal peptide occupies residues 1–16 (MFKRFIFITLSLLVFA). Cys17 is lipidated: N-palmitoyl cysteine. A lipid anchor (S-diacylglycerol cysteine) is attached at Cys17.

This sequence belongs to the BMP lipoprotein family. As to quaternary structure, monomer.

It localises to the cell inner membrane. Its function is as follows. May be part of an ABC-type nucleoside uptake system involved in the purine salvage pathway. In Borreliella burgdorferi (strain ATCC 35210 / DSM 4680 / CIP 102532 / B31) (Borrelia burgdorferi), this protein is Basic membrane protein C (bmpC).